The sequence spans 450 residues: Glucose-6-phosphate isomerase (450 aa).

Thr38 is subject to Phosphothreonine. The active-site Proton donor is Glu290. Catalysis depends on residues His311 and Lys425.

Belongs to the GPI family.

The protein localises to the cytoplasm. It catalyses the reaction alpha-D-glucose 6-phosphate = beta-D-fructose 6-phosphate. Its pathway is carbohydrate biosynthesis; gluconeogenesis. It participates in carbohydrate degradation; glycolysis; D-glyceraldehyde 3-phosphate and glycerone phosphate from D-glucose: step 2/4. Its function is as follows. Catalyzes the reversible isomerization of glucose-6-phosphate to fructose-6-phosphate. The chain is Glucose-6-phosphate isomerase from Bacillus licheniformis (strain ATCC 14580 / DSM 13 / JCM 2505 / CCUG 7422 / NBRC 12200 / NCIMB 9375 / NCTC 10341 / NRRL NRS-1264 / Gibson 46).